The sequence spans 153 residues: Large ribosomal subunit protein uL15 (153 aa).

A disordered region spans residues 21–40 (RGIGSGKGKTGGRGIKGQKS). The segment covering 23-35 (IGSGKGKTGGRGI) has biased composition (gly residues).

Belongs to the universal ribosomal protein uL15 family. In terms of assembly, part of the 50S ribosomal subunit.

Binds to the 23S rRNA. The sequence is that of Large ribosomal subunit protein uL15 from Rickettsia canadensis (strain McKiel).